We begin with the raw amino-acid sequence, 317 residues long: Ornithine carbamoyltransferase (317 aa).

Carbamoyl phosphate contacts are provided by residues serine 54–threonine 57, glutamine 81, arginine 105, and histidine 132–glutamine 135. L-ornithine is bound by residues asparagine 163, aspartate 227, and serine 231–methionine 232. Carbamoyl phosphate-binding positions include cysteine 267–leucine 268 and arginine 295.

The protein belongs to the aspartate/ornithine carbamoyltransferase superfamily. OTCase family.

It is found in the cytoplasm. It catalyses the reaction carbamoyl phosphate + L-ornithine = L-citrulline + phosphate + H(+). It functions in the pathway amino-acid biosynthesis; L-arginine biosynthesis; L-arginine from L-ornithine and carbamoyl phosphate: step 1/3. Its function is as follows. Reversibly catalyzes the transfer of the carbamoyl group from carbamoyl phosphate (CP) to the N(epsilon) atom of ornithine (ORN) to produce L-citrulline. The polypeptide is Ornithine carbamoyltransferase (Parafrankia sp. (strain EAN1pec)).